Reading from the N-terminus, the 420-residue chain is Pre-mRNA-splicing factor RBM22 (420 aa).

The C3H1-type zinc-finger motif lies at 159–186 (RNRPHICSFWVKGECKRGEECPYRHEKP). In terms of domain architecture, RRM spans 232 to 305 (TTLYVGGLGD…RRLNVKWGRS (74 aa)). Disordered stretches follow at residues 303 to 343 (GRSQ…AAEE) and 372 to 420 (APPP…HSSP). Basic and acidic residues predominate over residues 309–318 (RGKEKDKEGT).

This sequence belongs to the SLT11 family. Component of the pre-catalytic and catalytic spliceosome complexes. Component of the postcatalytic spliceosome P complex.

It is found in the nucleus. The protein resides in the cytoplasm. Functionally, required for pre-mRNA splicing as component of the activated spliceosome. Involved in the first step of pre-mRNA splicing. Binds directly to the internal stem-loop (ISL) domain of the U6 snRNA and to the pre-mRNA intron near the 5' splice site during the activation and catalytic phases of the spliceosome cycle. In Gallus gallus (Chicken), this protein is Pre-mRNA-splicing factor RBM22 (RBM22).